The chain runs to 377 residues: GDP-mannose 3,5-epimerase (377 aa).

Residue Gly-2 is modified to N-acetylglycine. Residues 34-60, Asp-58, and Asp-78 each bind NAD(+); that span reads GAGGFIASHIARRLKHEGHYVIASDWK. Residues Gly-103 and 143-145 each bind substrate; that span reads SAC. Residues Tyr-174 and Lys-178 each coordinate NAD(+). The active-site Proton acceptor is Tyr-174. Substrate contacts are provided by residues Asn-203, 216-218, Lys-225, 241-243, Arg-306, and Ser-356; these read EKA and QTR. Phosphoserine is present on Ser-369.

It belongs to the NAD(P)-dependent epimerase/dehydratase family. Homodimer. Interacts with chaperone Hsc70-3 protein, which may regulate epimerase activity. Requires NAD(+) as cofactor.

It catalyses the reaction GDP-alpha-D-mannose = GDP-beta-L-gulose. It carries out the reaction GDP-beta-L-gulose = GDP-beta-L-galactose. The protein operates within cofactor biosynthesis; L-ascorbate biosynthesis via GDP-alpha-D-mannose pathway; L-ascorbate from GDP-alpha-D-mannose: step 1/5. With respect to regulation, inhibited by GDP and GDP-D-glucose. Its function is as follows. Catalyzes a reversible epimerization of GDP-D-mannose that precedes the committed step in the biosynthesis of vitamin C (L-ascorbate), resulting in the hydrolysis of the highly energetic glycosyl-pyrophosphoryl linkage. Able to catalyze 2 distinct epimerization reactions and can release both GDP-L-galactose and GDP-L-gulose from GDP-mannose. In Arabidopsis thaliana (Mouse-ear cress), this protein is GDP-mannose 3,5-epimerase.